A 278-amino-acid polypeptide reads, in one-letter code: Phosphatidylglycerol--prolipoprotein diacylglyceryl transferase (278 aa).

Transmembrane regions (helical) follow at residues Trp-21–Val-41, Ile-54–Gln-74, and Ile-88–Ile-108. Arg-136 contributes to the a 1,2-diacyl-sn-glycero-3-phospho-(1'-sn-glycerol) binding site. The next 2 helical transmembrane spans lie at Gln-176–Leu-196 and Ile-234–Ile-254.

It belongs to the Lgt family.

The protein localises to the cell membrane. The catalysed reaction is L-cysteinyl-[prolipoprotein] + a 1,2-diacyl-sn-glycero-3-phospho-(1'-sn-glycerol) = an S-1,2-diacyl-sn-glyceryl-L-cysteinyl-[prolipoprotein] + sn-glycerol 1-phosphate + H(+). It participates in protein modification; lipoprotein biosynthesis (diacylglyceryl transfer). Its function is as follows. Catalyzes the transfer of the diacylglyceryl group from phosphatidylglycerol to the sulfhydryl group of the N-terminal cysteine of a prolipoprotein, the first step in the formation of mature lipoproteins. This Staphylococcus xylosus protein is Phosphatidylglycerol--prolipoprotein diacylglyceryl transferase.